The chain runs to 174 residues: Large ribosomal subunit protein uL10 (174 aa).

This sequence belongs to the universal ribosomal protein uL10 family. Part of the ribosomal stalk of the 50S ribosomal subunit. The N-terminus interacts with L11 and the large rRNA to form the base of the stalk. The C-terminus forms an elongated spine to which L12 dimers bind in a sequential fashion forming a multimeric L10(L12)X complex.

In terms of biological role, forms part of the ribosomal stalk, playing a central role in the interaction of the ribosome with GTP-bound translation factors. The sequence is that of Large ribosomal subunit protein uL10 from Geotalea uraniireducens (strain Rf4) (Geobacter uraniireducens).